Consider the following 303-residue polypeptide: 1-phosphofructokinase (303 aa).

248 to 249 (GD) contributes to the ATP binding site. D249 (proton acceptor) is an active-site residue.

Belongs to the carbohydrate kinase PfkB family.

The enzyme catalyses beta-D-fructose 1-phosphate + ATP = beta-D-fructose 1,6-bisphosphate + ADP + H(+). Its function is as follows. Catalyzes the ATP-dependent phosphorylation of fructose-l-phosphate to fructose-l,6-bisphosphate. The sequence is that of 1-phosphofructokinase (fruK) from Bacillus subtilis (strain 168).